Reading from the N-terminus, the 955-residue chain is Kinesin-like protein KIN-14L (955 aa).

Residues 19–140 (AARRFQAVQW…CILGLKAYHE (122 aa)) enclose the Calponin-homology (CH) domain. The 323-residue stretch at 363–685 (NIRVYCRVRP…LKFAQRVSTV (323 aa)) folds into the Kinesin motor domain. 445-452 (GQTGSGKT) is an ATP binding site. The stretch at 692 to 719 (AHKETREVMHLKEQIENLKRALGTEEWN) forms a coiled coil. The interval 878-942 (RKENIPADPR…GKPIENGKKD (65 aa)) is disordered. Positions 894-916 (NNFSHIKSPDTSNAKTMRRQSLT) are enriched in polar residues.

This sequence belongs to the TRAFAC class myosin-kinesin ATPase superfamily. Kinesin family. KIN-14 subfamily.

This is Kinesin-like protein KIN-14L from Arabidopsis thaliana (Mouse-ear cress).